A 1067-amino-acid chain; its full sequence is Dorsal-ventral patterning protein tolloid (1067 aa).

A signal peptide spans 1–36 (MKGMRLMPMKMKAKLVVLSVGALWMMMFFLVDYAEG). The propeptide occupies 37-136 (RRLSQLPESE…NGQPIQRRRR (100 aa)). In terms of domain architecture, Peptidase M12A spans 136-338 (RAVTVRKERT…VQANLLYKCA (203 aa)). Asn176 is a glycosylation site (N-linked (GlcNAc...) asparagine). Intrachain disulfides connect Cys179–Cys337, Cys201–Cys223, Cys203–Cys204, Cys340–Cys390, and Cys417–Cys439. His231 provides a ligand contact to Zn(2+). Glu232 is an active-site residue. 2 residues coordinate Zn(2+): His235 and His241. Short sequence motifs (cell attachment site) lie at residues 245–247 (RGD) and 325–327 (RGD). 2 consecutive CUB domains span residues 340–477 (CGRT…FEVV) and 478–591 (CGGD…LMLD). An N-linked (GlcNAc...) asparagine glycan is attached at Asn441. Intrachain disulfides connect Cys478-Cys505, Cys532-Cys554, Cys595-Cys606, Cys602-Cys615, Cys617-Cys630, and Cys634-Cys662. An N-linked (GlcNAc...) asparagine glycan is attached at Asn543. An EGF-like 1; calcium-binding domain is found at 591–631 (DVDECKFTDHGCQHLCINTLGSYQCGCRAGYELQANGKTCE). In terms of domain architecture, CUB 3 spans 634 to 753 (CGGVVDATKS…SGFVAKFVID (120 aa)). Asn644 and Asn677 each carry an N-linked (GlcNAc...) asparagine glycan. Cystine bridges form between Cys693-Cys716, Cys757-Cys768, Cys764-Cys777, Cys779-Cys792, Cys797-Cys823, Cys850-Cys872, Cys910-Cys940, and Cys967-Cys989. The EGF-like 2; calcium-binding domain occupies 753 to 793 (DVDECSMNNGGCQHRCRNTFGSYQCSCRNGYTLAENGHNCT). Asn791 is a glycosylation site (N-linked (GlcNAc...) asparagine). CUB domains lie at 797 to 909 (CKFE…FVSE) and 910 to 1026 (CGGY…FMAV). N-linked (GlcNAc...) asparagine glycans are attached at residues Asn864 and Asn918.

It depends on Zn(2+) as a cofactor.

In terms of biological role, metalloprotease which cleaves TGF-beta family ligands daw, Actbeta and myo in vitro. Cleavage of daw enhances its signaling activity. Cleaves dorsal-ventral patterning protein sog. Processes sog more efficiently than metalloprotease tld which also cleaves sog. Required for normal dorsal development. TLD may interact physically with DPP-C protein. The chain is Dorsal-ventral patterning protein tolloid (tld) from Drosophila melanogaster (Fruit fly).